Here is a 94-residue protein sequence, read N- to C-terminus: uncharacterized protein (94 aa).

Residues 1–23 (MVLLAGTRPQGGEARCMIPPPPS) are disordered.

This is an uncharacterized protein from Homo sapiens (Human).